The sequence spans 205 residues: Cerebellin-3 (205 aa).

The N-terminal stretch at 1–32 (MLGAKPHWLPGPLHSPGLPLVLVLLALGAGWA) is a signal peptide. The region spanning 67-205 (APPGRVAFAA…SFSGFLIFPL (139 aa)) is the C1q domain. The segment at 72-205 (VAFAAVRSHH…SFSGFLIFPL (134 aa)) is necessary for interaction with CBLN3, and homotrimerization. N-linked (GlcNAc...) asparagine glycosylation occurs at Asn-90.

Heterohexamer; disulfide-linked heterotrimers. Interacts with CBLN1. May also form oligomers with CBLN2 and CBLN4.

It is found in the endoplasmic reticulum. The protein resides in the golgi apparatus. The protein localises to the cis-Golgi network. Its subcellular location is the secreted. It localises to the synapse. In terms of biological role, may be involved in synaptic functions in the CNS. This Homo sapiens (Human) protein is Cerebellin-3 (CBLN3).